Consider the following 538-residue polypeptide: Probable inorganic phosphate transporter 1-4 (538 aa).

The Cytoplasmic portion of the chain corresponds to 1-23 (MAGELKVLNALDSAKTQWYHFTA). The helical transmembrane segment at 24-44 (IVIAGMGFFTDAYDLFSISLV) threads the bilayer. Residues 45–69 (TKLLGRIYYFNPASKSPGSLPPNVS) are Extracellular-facing. A helical transmembrane segment spans residues 70-90 (AAVNGVAFCGTLAGQLFFGWL). The Cytoplasmic portion of the chain corresponds to 91–98 (GDKMGRKK). Residues 99–119 (VYGMTLMLMVICCLASGLSFG) traverse the membrane as a helical segment. Topologically, residues 120-123 (SSAK) are extracellular. Residues 124 to 144 (GVMATLCFFRFWLGFGIGGDY) form a helical membrane-spanning segment. The Cytoplasmic portion of the chain corresponds to 145–163 (PLSATIMSEYANKRTRGAF). The helical transmembrane segment at 164 to 184 (IAAVFAMQGFGNLTGGIVAII) threads the bilayer. The Extracellular portion of the chain corresponds to 185-210 (VSAAFKARFDAPAYRDDRAGSTVPQA). The helical transmembrane segment at 211–231 (DYAWRIVLMFGAIPALLTYYW) threads the bilayer. Over 232–294 (RMKMPETARY…RQFLRRHGRH (63 aa)) the chain is Cytoplasmic. The helical transmembrane segment at 295–315 (LLGTTVCWFVLDIAFYSSNLF) threads the bilayer. Residues 316-346 (QKDIYTAVQWLPKADTMSALEEMFKISRAQT) are Extracellular-facing. Residues 347–367 (LVALCGTIPGYWFTVFFIDII) form a helical membrane-spanning segment. Over 368–369 (GR) the chain is Cytoplasmic. Residues 370 to 390 (FVIQLGGFFFMTAFMLGLAVP) traverse the membrane as a helical segment. Residues 391–396 (YHHWTT) are Extracellular-facing. Residues 397 to 417 (PGNHIGFVVMYAFTFFFANFG) traverse the membrane as a helical segment. The Cytoplasmic portion of the chain corresponds to 418–440 (PNSTTFIVPAEIFPARLRSTCHG). The chain crosses the membrane as a helical span at residues 441–461 (ISAAAGKAGAIVGSFGFLYAA). Over 462–481 (QSTDASKTDAGYPPGIGVRN) the chain is Extracellular. Residues 482–502 (SLFFLAGCNVIGFFFTFLVPE) traverse the membrane as a helical segment. Topologically, residues 503–538 (SKGKSLEELSGENEDDDDVPEAPSTADHRTAPAPPA) are cytoplasmic. The disordered stretch occupies residues 507–538 (SLEELSGENEDDDDVPEAPSTADHRTAPAPPA). Positions 511 to 522 (LSGENEDDDDVP) are enriched in acidic residues.

The protein belongs to the major facilitator superfamily. Phosphate:H(+) symporter (TC 2.A.1.9) family.

The protein resides in the membrane. In terms of biological role, high-affinity transporter for external inorganic phosphate. This is Probable inorganic phosphate transporter 1-4 (PHT1-4) from Oryza sativa subsp. indica (Rice).